Here is a 264-residue protein sequence, read N- to C-terminus: Hydroxyethylthiazole kinase (264 aa).

Residue M52 participates in substrate binding. Residues R127 and T173 each contribute to the ATP site. Position 200 (G200) interacts with substrate.

Belongs to the Thz kinase family. The cofactor is Mg(2+).

The enzyme catalyses 5-(2-hydroxyethyl)-4-methylthiazole + ATP = 4-methyl-5-(2-phosphooxyethyl)-thiazole + ADP + H(+). The protein operates within cofactor biosynthesis; thiamine diphosphate biosynthesis; 4-methyl-5-(2-phosphoethyl)-thiazole from 5-(2-hydroxyethyl)-4-methylthiazole: step 1/1. Its function is as follows. Catalyzes the phosphorylation of the hydroxyl group of 4-methyl-5-beta-hydroxyethylthiazole (THZ). This is Hydroxyethylthiazole kinase from Serratia proteamaculans (strain 568).